The chain runs to 779 residues: MNNKILEQLEFNKVKELLLPYLKTEQSQEELLELEPMTEAPKIEKSFNEISDMEQIFVEHHSFGIVSLSSISESLKRLELSADLNIQELLAIKKVLQSSSDMIHFYSDLDNVSFQSLDRLFENLEQFPNLQGSFQAINDGGFLEHFASPELERIRRQLTNSERRVRQILQDMLKEKAELLSENLIASRSGRSVLPVKNTYRNRISGVVHDISSSGSTVYIEPRAVVTLNEEITQLRADERHEEGRILHAFSDLLRPHVATIRNNAWILGHLDLVRAKYLFMSDNKATIPKISNDSTLALINVRHPLLSNPVANDLHFDHDLTAIVITGPNTGGKTIMLKTLGLAQLMGQSGLPVLADKGSKIAVFNNIFADIGDEQSIEQSLSTFSSHMTHIVSILNEADHNSLVLFDELGAGTDPQEGASLAMAILEHLRLSHIKTMATTHYPELKAYGIETNFVENASMEFDAETLSPTYRFMQGVPGRSNAFEIASRLGLAPFIVKQAKQMTDSDSDVNRIIEQLEAQTLETRRRLDHIKEVEQENLKFNRAVKKLYNEFSHERDKELEKIYQEAQEIVDMALNESDTILKKLNDKSQLKPHEIIDAKAQIKKLAPQVDLSKNKVLNKAKKIKAARAPRIGDDIIVTSYGQRGTLTSQLKDGRWEAQVGIIKMTLTHDEFTLVRVQEEQKVKNKQINVVKKADSSGPRARLDLRGKRYEEAMQELDHFIDQALLNNMGQVDIIHGIGTGVIREGVTKYLRRHKHVKHFAYAPQNAGGSGATIVTLG.

328–335 (GPNTGGKT) lines the ATP pocket. Residues 704-779 (LDLRGKRYEE…GSGATIVTLG (76 aa)) form the Smr domain.

It belongs to the DNA mismatch repair MutS family. MutS2 subfamily. As to quaternary structure, homodimer. Binds to stalled ribosomes, contacting rRNA.

Its function is as follows. Endonuclease that is involved in the suppression of homologous recombination and thus may have a key role in the control of bacterial genetic diversity. In terms of biological role, acts as a ribosome collision sensor, splitting the ribosome into its 2 subunits. Detects stalled/collided 70S ribosomes which it binds and splits by an ATP-hydrolysis driven conformational change. Acts upstream of the ribosome quality control system (RQC), a ribosome-associated complex that mediates the extraction of incompletely synthesized nascent chains from stalled ribosomes and their subsequent degradation. Probably generates substrates for RQC. In Streptococcus pyogenes serotype M18 (strain MGAS8232), this protein is Endonuclease MutS2.